The primary structure comprises 421 residues: U-box domain-containing protein 25 (421 aa).

The U-box domain occupies 13–88; sequence QIPYHFRCPI…QEWCVANRSN (76 aa).

It carries out the reaction S-ubiquitinyl-[E2 ubiquitin-conjugating enzyme]-L-cysteine + [acceptor protein]-L-lysine = [E2 ubiquitin-conjugating enzyme]-L-cysteine + N(6)-ubiquitinyl-[acceptor protein]-L-lysine.. It participates in protein modification; protein ubiquitination. Functions as an E3 ubiquitin ligase. The chain is U-box domain-containing protein 25 (PUB25) from Arabidopsis thaliana (Mouse-ear cress).